The following is a 165-amino-acid chain: Probable velvet family sexual development regulator CC1G_12219 (165 aa).

One can recognise a Velvet domain in the interval 1-121 (MSNTDAQTSF…SVWGAQVNVR (121 aa)).

Belongs to the velvet family.

It is found in the nucleus. Velvet-domain-containing protein that probably acts as a positive regulator of sexual development. This Coprinopsis cinerea (strain Okayama-7 / 130 / ATCC MYA-4618 / FGSC 9003) (Inky cap fungus) protein is Probable velvet family sexual development regulator CC1G_12219.